Reading from the N-terminus, the 183-residue chain is Large ribosomal subunit protein bL25 (183 aa).

The protein belongs to the bacterial ribosomal protein bL25 family. CTC subfamily. In terms of assembly, part of the 50S ribosomal subunit; part of the 5S rRNA/L5/L18/L25 subcomplex. Contacts the 5S rRNA. Binds to the 5S rRNA independently of L5 and L18.

Its function is as follows. This is one of the proteins that binds to the 5S RNA in the ribosome where it forms part of the central protuberance. This Desulfotalea psychrophila (strain LSv54 / DSM 12343) protein is Large ribosomal subunit protein bL25.